Here is a 212-residue protein sequence, read N- to C-terminus: Deoxyribose-phosphate aldolase (212 aa).

The Proton donor/acceptor role is filled by aspartate 89. The active-site Schiff-base intermediate with acetaldehyde is lysine 151. Catalysis depends on lysine 180, which acts as the Proton donor/acceptor.

This sequence belongs to the DeoC/FbaB aldolase family. DeoC type 1 subfamily.

The protein localises to the cytoplasm. The catalysed reaction is 2-deoxy-D-ribose 5-phosphate = D-glyceraldehyde 3-phosphate + acetaldehyde. It functions in the pathway carbohydrate degradation; 2-deoxy-D-ribose 1-phosphate degradation; D-glyceraldehyde 3-phosphate and acetaldehyde from 2-deoxy-alpha-D-ribose 1-phosphate: step 2/2. Its function is as follows. Catalyzes a reversible aldol reaction between acetaldehyde and D-glyceraldehyde 3-phosphate to generate 2-deoxy-D-ribose 5-phosphate. This is Deoxyribose-phosphate aldolase from Clostridium botulinum (strain Kyoto / Type A2).